The chain runs to 143 residues: ATP synthase subunit b' (143 aa).

A helical membrane pass occupies residues 6-26 (ATLPFMALQFLLLAAVLNAIF).

This sequence belongs to the ATPase B chain family. In terms of assembly, F-type ATPases have 2 components, F(1) - the catalytic core - and F(0) - the membrane proton channel. F(1) has five subunits: alpha(3), beta(3), gamma(1), delta(1), epsilon(1). F(0) has four main subunits: a(1), b(1), b'(1) and c(10-14). The alpha and beta chains form an alternating ring which encloses part of the gamma chain. F(1) is attached to F(0) by a central stalk formed by the gamma and epsilon chains, while a peripheral stalk is formed by the delta, b and b' chains.

It localises to the cellular thylakoid membrane. Functionally, f(1)F(0) ATP synthase produces ATP from ADP in the presence of a proton or sodium gradient. F-type ATPases consist of two structural domains, F(1) containing the extramembraneous catalytic core and F(0) containing the membrane proton channel, linked together by a central stalk and a peripheral stalk. During catalysis, ATP synthesis in the catalytic domain of F(1) is coupled via a rotary mechanism of the central stalk subunits to proton translocation. Its function is as follows. Component of the F(0) channel, it forms part of the peripheral stalk, linking F(1) to F(0). The b'-subunit is a diverged and duplicated form of b found in plants and photosynthetic bacteria. This is ATP synthase subunit b' from Nostoc punctiforme (strain ATCC 29133 / PCC 73102).